The following is a 1123-amino-acid chain: Phytochrome A (1123 aa).

Over residues 1–14 (MSSSRPSQSSTTSS) the composition is skewed to low complexity. Residues 1 to 20 (MSSSRPSQSSTTSSRSKHSA) form a disordered region. One can recognise a GAF domain in the interval 218 to 401 (SMERLCDTMV…VFAILVNKEL (184 aa)). Cys323 provides a ligand contact to phytochromobilin. A PAS 1 domain is found at 617-687 (VTAEMVRLIE…KMLELALQGQ (71 aa)). The 57-residue stretch at 690-746 (RNVEFEIKTHGPSRDSSPISLIVNACASKDVRDSVVGVCFIAQDITGQKSIMDKFTR) folds into the PAC domain. The PAS 2 domain occupies 747 to 821 (IEGDYRAIIQ…KNQEAFVNFG (75 aa)). One can recognise a Histidine kinase domain in the interval 901–1118 (YIRRQIRNPL…TFIISVELAV (218 aa)).

This sequence belongs to the phytochrome family. As to quaternary structure, homodimer. Post-translationally, contains one covalently linked phytochromobilin chromophore.

Its function is as follows. Regulatory photoreceptor which exists in two forms that are reversibly interconvertible by light: the Pr form that absorbs maximally in the red region of the spectrum and the Pfr form that absorbs maximally in the far-red region. Photoconversion of Pr to Pfr induces an array of morphogenic responses, whereas reconversion of Pfr to Pr cancels the induction of those responses. Pfr controls the expression of a number of nuclear genes including those encoding the small subunit of ribulose-bisphosphate carboxylase, chlorophyll A/B binding protein, protochlorophyllide reductase, rRNA, etc. It also controls the expression of its own gene(s) in a negative feedback fashion. This chain is Phytochrome A (PHYA), found in Solanum tuberosum (Potato).